A 262-amino-acid chain; its full sequence is GDT1-like protein C186.05c (262 aa).

5 helical membrane passes run 31–51 (ISMI…ALLA), 57–77 (ASVF…AVLV), 83–103 (FLFP…IFGV), 208–228 (VLDV…VAVI), and 242–262 (VLFF…FQGF).

It belongs to the GDT1 family.

It localises to the endoplasmic reticulum membrane. This is GDT1-like protein C186.05c from Schizosaccharomyces pombe (strain 972 / ATCC 24843) (Fission yeast).